A 74-amino-acid polypeptide reads, in one-letter code: Protein krueppel (74 aa).

4 C2H2-type zinc fingers span residues 1-4, 10-32, 38-60, and 66-74; these read ERTH, FECP…MRLH, YHCS…LRVH, and YACELCDAR.

It belongs to the krueppel C2H2-type zinc-finger protein family.

The protein localises to the nucleus. Krueppel is a gap class segmentation protein. This Psychoda cinerea (Psychod fly) protein is Protein krueppel (Kr).